A 432-amino-acid polypeptide reads, in one-letter code: Maltoporin (432 aa).

The first 22 residues, 1-22, serve as a signal peptide directing secretion; that stretch reads MKKVSVIAAAVAATLAAGSAFA.

The protein belongs to the porin LamB (TC 1.B.3) family. As to quaternary structure, homotrimer formed of three 18-stranded antiparallel beta-barrels, containing three independent channels.

The protein localises to the cell outer membrane. It catalyses the reaction beta-maltose(in) = beta-maltose(out). Functionally, involved in the transport of maltose and maltodextrins. The sequence is that of Maltoporin from Vibrio parahaemolyticus serotype O3:K6 (strain RIMD 2210633).